Reading from the N-terminus, the 226-residue chain is Endonuclease NucS (226 aa).

The protein belongs to the NucS endonuclease family.

Its subcellular location is the cytoplasm. In terms of biological role, cleaves both 3' and 5' ssDNA extremities of branched DNA structures. This chain is Endonuclease NucS, found in Mycobacterium tuberculosis (strain CDC 1551 / Oshkosh).